The primary structure comprises 304 residues: DCN1-like protein 3 (304 aa).

Disordered stretches follow at residues 1–87 and 284–304; these read MGQC…EESS and EGEGRGALSSGPEGLCPEEQT. Gly2 is lipidated: N-myristoyl glycine. The DCUN1 domain occupies 86-278; it reads SSLQRLEELF…LFDTFVEWEM (193 aa).

In terms of assembly, part of a complex containing DCUN1D3, CUL3 and RBX1. Interacts (via the DCUN1 domain) with the unneddylated cullins: interacts with CUL1, CUL2, CUL3, CUL4A, CUL4B and CUL5; these interactions promote the cullin neddylation and the identity of the cullin dictates the affinity of the interaction. Interacts preferentially with CUL3; this interaction triggers the relocalization of CUL3 to the cell membrane where CUL3 is neddylated. Interacts (via DCUN1 domain) with RBX1. May also interact with regulators or subunits of cullin-RING ligases such as RNF7, ELOB and DDB1; these interactions are bridged by cullins. Interacts (via DCUN1 domain) with CAND1; this interaction is bridged by cullins and strongly inhibits cullin neddylation. These CAND-cullin-DCNL complexes can only be neddylated in the presence of a substrate adapter. Interacts (via DCUN1 domain) with the N-terminally acetylated form of UBE2M and UBE2F.

Its subcellular location is the cell membrane. The protein localises to the cytoplasm. It is found in the nucleus. The protein resides in the perinuclear region. In terms of biological role, contributes to the neddylation of all cullins by transferring NEDD8 from N-terminally acetylated NEDD8-conjugating E2s enzyme to different cullin C-terminal domain-RBX complexes and may play a role in the cell cycle progression by regulating the SCF ubiquitin E3 ligase complex, after UV damage. At the cell membrane, can promote and as well inhibit cullins neddylation. The protein is DCN1-like protein 3 of Bos taurus (Bovine).